The following is a 322-amino-acid chain: Pantothenate kinase (322 aa).

An ATP-binding site is contributed by 101–108; that stretch reads GSVAVGKS.

It belongs to the prokaryotic pantothenate kinase family.

The protein resides in the cytoplasm. The catalysed reaction is (R)-pantothenate + ATP = (R)-4'-phosphopantothenate + ADP + H(+). The protein operates within cofactor biosynthesis; coenzyme A biosynthesis; CoA from (R)-pantothenate: step 1/5. This is Pantothenate kinase from Psychromonas ingrahamii (strain DSM 17664 / CCUG 51855 / 37).